The primary structure comprises 248 residues: ATP synthase subunit a, chloroplastic (248 aa).

Transmembrane regions (helical) follow at residues 37–57 (AQVL…AILA), 96–116 (VPFI…GALL), 134–154 (DINT…YAGL), 200–220 (LVVA…MMFL), and 221–241 (GLFT…AYIG).

Belongs to the ATPase A chain family. F-type ATPases have 2 components, CF(1) - the catalytic core - and CF(0) - the membrane proton channel. CF(1) has five subunits: alpha(3), beta(3), gamma(1), delta(1), epsilon(1). CF(0) has four main subunits: a, b, b' and c.

It is found in the plastid. It localises to the chloroplast thylakoid membrane. Key component of the proton channel; it plays a direct role in the translocation of protons across the membrane. The polypeptide is ATP synthase subunit a, chloroplastic (Anthoceros angustus (Hornwort)).